Consider the following 498-residue polypeptide: MSEMRTHFPDRPQFSGFMKPCRVEGDISQLEVYGEIPKEIDGVFYRVMPDPQLPPFIENDPWFNGDGNVTAFRIQDGRASFRQRYVRTEKFMRERKAQRALLGKYRNKFTDAVEFRVRSTANTNVVFFNGQLLALKEDSPPYAMDPITLETKGLYDFEGQLPALTFTAHPKFDPVTGEMVCFGYEARGDGTPDVCYYRVSPTGQFKEVVWLVAPVVAMIHDFAVTDNWVVFPIIPQVCDIERMKQGGEHWQWSPETPLYLGVIPRRGAKGEDVKWFQYKNSFPGHTANAYEDKEGHLVIDLGLSEKNVFFWWPDAQGNAPEPSSIHSQLVRFTLNPHAEDLALPEPKILHQGNSEFYRIDDRFATHSYRHCYFDLMDPQLGTDFERIRPNLGGGYPLYNSLAHFDNATGQTEVYFPGNTHLVQEPVFIPRKDSTTEGDGWVLALVNNYATMASELHLLDTRDFTHAQAKILLPIRLRHGLHGSWVDGRDIGSQTEQLQ.

The piceatannol site is built by tyrosine 105 and lysine 136. Trans-resveratrol is bound by residues tyrosine 105 and lysine 136. Positions 169, 220, and 285 each coordinate Fe cation. A piceatannol-binding site is contributed by glutamate 355. Glutamate 355 serves as a coordination point for trans-resveratrol. Residue histidine 481 coordinates Fe cation.

Belongs to the carotenoid oxygenase family. Fe(2+) is required as a cofactor.

It catalyses the reaction trans-resveratrol + O2 = 3,5-dihydroxybenzaldehyde + 4-hydroxybenzaldehyde. The catalysed reaction is piceatannol + O2 = 3,5-dihydroxybenzaldehyde + 3,4-dihydroxybenzaldehyde. In terms of biological role, dioxygenase that cleaves the interphenyl C-alpha-C-beta double bond of resveratrol to yield 3,5-dihydroxybenzaldehyde and 4-hydroxybenzaldehyde. Also cleaves piceatannol, a compound that differs from resveratrol only in the occurrence of an additional hydroxyl group, which leads to the production of 3,4-dihydroxybenzaldehyde and 3,5-hydroxybenzaldehyde. This is Resveratrol cleavage oxygenase 1 from Aspergillus fumigatus (strain ATCC MYA-4609 / CBS 101355 / FGSC A1100 / Af293) (Neosartorya fumigata).